The sequence spans 210 residues: Pyridoxine/pyridoxamine 5'-phosphate oxidase (210 aa).

Substrate contacts are provided by residues 7 to 10 (RDEY) and Lys65. Residues 60–65 (RMVLLK), 75–76 (FT), Arg81, Lys82, and Gln104 contribute to the FMN site. The substrate site is built by Tyr122, Arg126, and Ser130. Residues 139–140 (QS) and Trp183 each bind FMN. 189-191 (RLH) contacts substrate. Arg193 is a binding site for FMN.

The protein belongs to the pyridoxamine 5'-phosphate oxidase family. As to quaternary structure, homodimer. Requires FMN as cofactor.

It carries out the reaction pyridoxamine 5'-phosphate + O2 + H2O = pyridoxal 5'-phosphate + H2O2 + NH4(+). The catalysed reaction is pyridoxine 5'-phosphate + O2 = pyridoxal 5'-phosphate + H2O2. Its pathway is cofactor metabolism; pyridoxal 5'-phosphate salvage; pyridoxal 5'-phosphate from pyridoxamine 5'-phosphate: step 1/1. The protein operates within cofactor metabolism; pyridoxal 5'-phosphate salvage; pyridoxal 5'-phosphate from pyridoxine 5'-phosphate: step 1/1. Catalyzes the oxidation of either pyridoxine 5'-phosphate (PNP) or pyridoxamine 5'-phosphate (PMP) into pyridoxal 5'-phosphate (PLP). The polypeptide is Pyridoxine/pyridoxamine 5'-phosphate oxidase (Haemophilus influenzae (strain ATCC 51907 / DSM 11121 / KW20 / Rd)).